Here is a 210-residue protein sequence, read N- to C-terminus: Superoxide dismutase [Mn], mitochondrial (210 aa).

Positions 29, 77, 164, and 168 each coordinate Mn(2+).

This sequence belongs to the iron/manganese superoxide dismutase family. As to quaternary structure, homotetramer. Mn(2+) is required as a cofactor.

The protein resides in the mitochondrion matrix. It catalyses the reaction 2 superoxide + 2 H(+) = H2O2 + O2. In terms of biological role, destroys superoxide anion radicals which are normally produced within the cells and which are toxic to biological systems. The protein is Superoxide dismutase [Mn], mitochondrial (sodB) of Aspergillus oryzae (strain ATCC 42149 / RIB 40) (Yellow koji mold).